A 180-amino-acid polypeptide reads, in one-letter code: Putative 3-methyladenine DNA glycosylase (180 aa).

This sequence belongs to the DNA glycosylase MPG family.

The chain is Putative 3-methyladenine DNA glycosylase from Wolbachia pipientis wMel.